A 489-amino-acid polypeptide reads, in one-letter code: Dipeptide and tripeptide permease B (489 aa).

Residues 1 to 27 lie on the Cytoplasmic side of the membrane; that stretch reads MNTTTPMGMLQQPRPFFMIFFVELWER. The chain crosses the membrane as a helical span at residues 28 to 48; sequence FGYYGVQGVLAVFFVKQLGFS. Topologically, residues 49–52 are periplasmic; that stretch reads QEQA. A helical transmembrane segment spans residues 53 to 73; it reads FVTFGAFAALVYGLISIGGYV. Topologically, residues 74-82 are cytoplasmic; the sequence is GDHLLGTKR. A helical transmembrane segment spans residues 83 to 103; sequence TIVLGALVLAIGYFMTGLSLL. At 104–106 the chain is on the periplasmic side; it reads KPD. The helical transmembrane segment at 107 to 127 threads the bilayer; it reads LIFIALGTIAVGNGLFKANPA. Topologically, residues 128 to 146 are cytoplasmic; that stretch reads SLLSKCYPPKAPRLDGAFT. The helical transmembrane segment at 147–167 threads the bilayer; that stretch reads LFYMSINIGSLIALSLAPVIA. At 168 to 172 the chain is on the periplasmic side; that stretch reads DRFGY. The helical transmembrane segment at 173–193 threads the bilayer; sequence SVTYNLCGAGLIIALLVYIAC. Residues 194–210 are Cytoplasmic-facing; sequence RGMVKDIGSEPDFRPMS. The chain crosses the membrane as a helical span at residues 211 to 231; that stretch reads FSKLLYVLLGSVVMIFVCAWL. At 232–233 the chain is on the periplasmic side; that stretch reads MH. The helical transmembrane segment at 234–254 threads the bilayer; the sequence is NVEVANLVLIVLSIVVTIIFF. Residues 255–267 are Cytoplasmic-facing; the sequence is RQAFKLDKTGRNK. Residues 268 to 288 traverse the membrane as a helical segment; sequence MFVAFVLMLEAVVFYILYAQM. Residues 289–311 are Periplasmic-facing; it reads PTSLNFFAINNVHHEILGFSINP. The helical transmembrane segment at 312-332 threads the bilayer; that stretch reads VSFQALNPFWVVLASPILAGI. Residues 333-350 are Cytoplasmic-facing; it reads YTHLGSKGKDLSMPMKFT. A helical transmembrane segment spans residues 351-371; the sequence is LGMFMCSLGFLTAAAAGMWFA. Residues 372–380 lie on the Periplasmic side of the membrane; sequence DAQGLTSPW. The helical transmembrane segment at 381–401 threads the bilayer; the sequence is FIVLVYLFQSLGELFISALGL. Topologically, residues 402-411 are cytoplasmic; it reads AMVAALVPQH. Residues 412 to 432 traverse the membrane as a helical segment; the sequence is LMGFILGISFLTQAAAFLLGG. The Periplasmic segment spans residues 433 to 456; that stretch reads YVATFTAVPDNITDPLETLPVYTN. A helical membrane pass occupies residues 457–477; the sequence is VFGKIGLVTLGVAVVMLLMVP. Residues 478 to 489 lie on the Cytoplasmic side of the membrane; the sequence is WLKRMIAAPESH.

The protein belongs to the major facilitator superfamily. Proton-dependent oligopeptide transporter (POT/PTR) (TC 2.A.17) family. DtpB subfamily.

The protein localises to the cell inner membrane. Proton-dependent permease that transports di- and tripeptides. The sequence is that of Dipeptide and tripeptide permease B from Shigella dysenteriae serotype 1 (strain Sd197).